We begin with the raw amino-acid sequence, 205 residues long: Adenylyl-sulfate kinase (205 aa).

Residue 31–38 coordinates ATP; it reads GLSGAGKS. Ser105 (phosphoserine intermediate) is an active-site residue.

Belongs to the APS kinase family.

It catalyses the reaction adenosine 5'-phosphosulfate + ATP = 3'-phosphoadenylyl sulfate + ADP + H(+). Its pathway is sulfur metabolism; hydrogen sulfide biosynthesis; sulfite from sulfate: step 2/3. Its function is as follows. Catalyzes the synthesis of activated sulfate. The chain is Adenylyl-sulfate kinase from Shewanella baltica (strain OS195).